The sequence spans 155 residues: SsrA-binding protein (155 aa).

This sequence belongs to the SmpB family.

Its subcellular location is the cytoplasm. Functionally, required for rescue of stalled ribosomes mediated by trans-translation. Binds to transfer-messenger RNA (tmRNA), required for stable association of tmRNA with ribosomes. tmRNA and SmpB together mimic tRNA shape, replacing the anticodon stem-loop with SmpB. tmRNA is encoded by the ssrA gene; the 2 termini fold to resemble tRNA(Ala) and it encodes a 'tag peptide', a short internal open reading frame. During trans-translation Ala-aminoacylated tmRNA acts like a tRNA, entering the A-site of stalled ribosomes, displacing the stalled mRNA. The ribosome then switches to translate the ORF on the tmRNA; the nascent peptide is terminated with the 'tag peptide' encoded by the tmRNA and targeted for degradation. The ribosome is freed to recommence translation, which seems to be the essential function of trans-translation. The sequence is that of SsrA-binding protein from Streptococcus pneumoniae serotype 4 (strain ATCC BAA-334 / TIGR4).